The primary structure comprises 245 residues: Thiopurine S-methyltransferase (245 aa).

An S-adenosyl-L-methionine-binding site is contributed by 29–40 (WQEKWVSRRIGF). Residue Phe40 coordinates substrate. Lys58 carries the post-translational modification N6-acetyllysine. S-adenosyl-L-methionine-binding residues include Leu69, Glu90, and Arg152.

Belongs to the class I-like SAM-binding methyltransferase superfamily. TPMT family. In terms of assembly, monomer.

It is found in the cytoplasm. It carries out the reaction S-adenosyl-L-methionine + a thiopurine = S-adenosyl-L-homocysteine + a thiopurine S-methylether.. This is Thiopurine S-methyltransferase (TPMT) from Lycaon pictus (African wild dog).